Consider the following 122-residue polypeptide: S-adenosylmethionine decarboxylase proenzyme (122 aa).

The Schiff-base intermediate with substrate; via pyruvic acid role is filled by Ser-63. A Pyruvic acid (Ser); by autocatalysis modification is found at Ser-63. His-68 serves as the catalytic Proton acceptor; for processing activity. Cys-83 functions as the Proton donor; for catalytic activity in the catalytic mechanism.

It belongs to the prokaryotic AdoMetDC family. Type 1 subfamily. Heterotetramer of two alpha and two beta chains arranged as a dimer of alpha/beta heterodimers. Pyruvate is required as a cofactor. In terms of processing, is synthesized initially as an inactive proenzyme. Formation of the active enzyme involves a self-maturation process in which the active site pyruvoyl group is generated from an internal serine residue via an autocatalytic post-translational modification. Two non-identical subunits are generated from the proenzyme in this reaction, and the pyruvate is formed at the N-terminus of the alpha chain, which is derived from the carboxyl end of the proenzyme. The post-translation cleavage follows an unusual pathway, termed non-hydrolytic serinolysis, in which the side chain hydroxyl group of the serine supplies its oxygen atom to form the C-terminus of the beta chain, while the remainder of the serine residue undergoes an oxidative deamination to produce ammonia and the pyruvoyl group blocking the N-terminus of the alpha chain.

The catalysed reaction is S-adenosyl-L-methionine + H(+) = S-adenosyl 3-(methylsulfanyl)propylamine + CO2. It participates in amine and polyamine biosynthesis; S-adenosylmethioninamine biosynthesis; S-adenosylmethioninamine from S-adenosyl-L-methionine: step 1/1. In terms of biological role, catalyzes the decarboxylation of S-adenosylmethionine to S-adenosylmethioninamine (dcAdoMet), the propylamine donor required for the synthesis of the polyamines spermine and spermidine from the diamine putrescine. The polypeptide is S-adenosylmethionine decarboxylase proenzyme (Methanococcus maripaludis (strain C7 / ATCC BAA-1331)).